The chain runs to 274 residues: Dermonecrotic toxin SdSicTox-betaIIB1bviii (274 aa).

His-5 is an active-site residue. Residues Glu-25 and Asp-27 each coordinate Mg(2+). Catalysis depends on His-41, which acts as the Nucleophile. 2 disulfide bridges follow: Cys-45–Cys-51 and Cys-47–Cys-190. Asp-85 is a Mg(2+) binding site.

Belongs to the arthropod phospholipase D family. Class II subfamily. Mg(2+) is required as a cofactor. Expressed by the venom gland.

It localises to the secreted. It carries out the reaction an N-(acyl)-sphingosylphosphocholine = an N-(acyl)-sphingosyl-1,3-cyclic phosphate + choline. The enzyme catalyses an N-(acyl)-sphingosylphosphoethanolamine = an N-(acyl)-sphingosyl-1,3-cyclic phosphate + ethanolamine. It catalyses the reaction a 1-acyl-sn-glycero-3-phosphocholine = a 1-acyl-sn-glycero-2,3-cyclic phosphate + choline. The catalysed reaction is a 1-acyl-sn-glycero-3-phosphoethanolamine = a 1-acyl-sn-glycero-2,3-cyclic phosphate + ethanolamine. In terms of biological role, dermonecrotic toxins cleave the phosphodiester linkage between the phosphate and headgroup of certain phospholipids (sphingolipid and lysolipid substrates), forming an alcohol (often choline) and a cyclic phosphate. This toxin acts on sphingomyelin (SM). It may also act on ceramide phosphoethanolamine (CPE), lysophosphatidylcholine (LPC) and lysophosphatidylethanolamine (LPE), but not on lysophosphatidylserine (LPS), and lysophosphatidylglycerol (LPG). It acts by transphosphatidylation, releasing exclusively cyclic phosphate products as second products. Induces dermonecrosis, hemolysis, increased vascular permeability, edema, inflammatory response, and platelet aggregation. The chain is Dermonecrotic toxin SdSicTox-betaIIB1bviii from Sicarius cf. damarensis (strain GJB-2008) (Six-eyed sand spider).